Here is a 191-residue protein sequence, read N- to C-terminus: Ribosomal RNA large subunit methyltransferase E (191 aa).

5 residues coordinate S-adenosyl-L-methionine: Gly-49, Trp-51, Asp-66, Asp-82, and Asp-105. Residue Lys-145 is the Proton acceptor of the active site.

This sequence belongs to the class I-like SAM-binding methyltransferase superfamily. RNA methyltransferase RlmE family.

The protein resides in the cytoplasm. The catalysed reaction is uridine(2552) in 23S rRNA + S-adenosyl-L-methionine = 2'-O-methyluridine(2552) in 23S rRNA + S-adenosyl-L-homocysteine + H(+). Specifically methylates the uridine in position 2552 of 23S rRNA at the 2'-O position of the ribose in the fully assembled 50S ribosomal subunit. The polypeptide is Ribosomal RNA large subunit methyltransferase E (Archaeoglobus fulgidus (strain ATCC 49558 / DSM 4304 / JCM 9628 / NBRC 100126 / VC-16)).